Consider the following 212-residue polypeptide: 2-dehydro-3-deoxy-phosphogluconate aldolase (212 aa).

Residue glutamate 45 is the Proton acceptor of the active site. 3 residues coordinate pyruvate: arginine 49, threonine 73, and lysine 133. The Schiff-base intermediate with substrate role is filled by lysine 133.

Belongs to the KHG/KDPG aldolase family. In terms of assembly, homotrimer.

The protein resides in the cytoplasm. It carries out the reaction 2-dehydro-3-deoxy-6-phospho-D-gluconate = D-glyceraldehyde 3-phosphate + pyruvate. Its pathway is carbohydrate acid metabolism; 2-dehydro-3-deoxy-D-gluconate degradation; D-glyceraldehyde 3-phosphate and pyruvate from 2-dehydro-3-deoxy-D-gluconate: step 2/2. Its function is as follows. Involved in the degradation of glucose via the Entner-Doudoroff pathway. Catalyzes the reversible, stereospecific retro-aldol cleavage of 2-keto-3-deoxy-6-phosphogluconate (KDPG) to pyruvate and D-glyceraldehyde-3-phosphate. In Haemophilus influenzae (strain ATCC 51907 / DSM 11121 / KW20 / Rd), this protein is 2-dehydro-3-deoxy-phosphogluconate aldolase (eda).